Here is a 322-residue protein sequence, read N- to C-terminus: Tyrosine recombinase XerC (322 aa).

Positions 1–25 (MPEAAPPVADARGSSPTATTGPGAD) are disordered. Low complexity predominate over residues 16 to 25 (PTATTGPGAD). Residues 25–111 (DATLSAVEPF…ACRSYYAWLL (87 aa)) enclose the Core-binding (CB) domain. In terms of domain architecture, Tyr recombinase spans 132–309 (KLPQVLDADE…DFQHLAKVYD (178 aa)). Active-site residues include R171, K195, H261, R264, and H287. Y296 serves as the catalytic O-(3'-phospho-DNA)-tyrosine intermediate.

Belongs to the 'phage' integrase family. XerC subfamily. As to quaternary structure, forms a cyclic heterotetrameric complex composed of two molecules of XerC and two molecules of XerD.

It is found in the cytoplasm. Functionally, site-specific tyrosine recombinase, which acts by catalyzing the cutting and rejoining of the recombining DNA molecules. The XerC-XerD complex is essential to convert dimers of the bacterial chromosome into monomers to permit their segregation at cell division. It also contributes to the segregational stability of plasmids. The sequence is that of Tyrosine recombinase XerC from Xanthomonas campestris pv. campestris (strain 8004).